A 658-amino-acid polypeptide reads, in one-letter code: Glycogen debranching enzyme (658 aa).

The Nucleophile role is filled by Asp-335. The active-site Proton donor is Glu-370. Over residues 457–468 (NDANGEGNRDGT) the composition is skewed to basic and acidic residues. The interval 457–478 (NDANGEGNRDGTDSNFSNNHGT) is disordered.

Belongs to the glycosyl hydrolase 13 family.

It carries out the reaction Hydrolysis of (1-&gt;6)-alpha-D-glucosidic linkages to branches with degrees of polymerization of three or four glucose residues in limit dextrin.. Its pathway is glycan degradation; glycogen degradation. Functionally, removes maltotriose and maltotetraose chains that are attached by 1,6-alpha-linkage to the limit dextrin main chain, generating a debranched limit dextrin. The chain is Glycogen debranching enzyme from Pectobacterium carotovorum subsp. carotovorum (strain PC1).